We begin with the raw amino-acid sequence, 207 residues long: 3-demethoxyubiquinol 3-hydroxylase (207 aa).

Residues 22–32 show a composition bias toward basic and acidic residues; it reads ERANPADRLAP. The tract at residues 22–41 is disordered; that stretch reads ERANPADRLAPETEQMNPEE. Glu-56, Glu-86, His-89, Glu-138, Glu-170, and His-173 together coordinate Fe cation.

Belongs to the COQ7 family. It depends on Fe cation as a cofactor.

It localises to the cell membrane. It carries out the reaction a 5-methoxy-2-methyl-3-(all-trans-polyprenyl)benzene-1,4-diol + AH2 + O2 = a 3-demethylubiquinol + A + H2O. It functions in the pathway cofactor biosynthesis; ubiquinone biosynthesis. Functionally, catalyzes the hydroxylation of 2-nonaprenyl-3-methyl-6-methoxy-1,4-benzoquinol during ubiquinone biosynthesis. The chain is 3-demethoxyubiquinol 3-hydroxylase from Cupriavidus metallidurans (strain ATCC 43123 / DSM 2839 / NBRC 102507 / CH34) (Ralstonia metallidurans).